A 156-amino-acid polypeptide reads, in one-letter code: 6,7-dimethyl-8-ribityllumazine synthase (156 aa).

5-amino-6-(D-ribitylamino)uracil is bound by residues phenylalanine 22, 57-59, and 81-83; these read AYE and TVI. 86–87 contributes to the (2S)-2-hydroxy-3-oxobutyl phosphate binding site; it reads GT. Histidine 89 (proton donor) is an active-site residue. A 5-amino-6-(D-ribitylamino)uracil-binding site is contributed by phenylalanine 114. Arginine 128 lines the (2S)-2-hydroxy-3-oxobutyl phosphate pocket.

Belongs to the DMRL synthase family. Forms an icosahedral capsid composed of 60 subunits, arranged as a dodecamer of pentamers.

The enzyme catalyses (2S)-2-hydroxy-3-oxobutyl phosphate + 5-amino-6-(D-ribitylamino)uracil = 6,7-dimethyl-8-(1-D-ribityl)lumazine + phosphate + 2 H2O + H(+). Its pathway is cofactor biosynthesis; riboflavin biosynthesis; riboflavin from 2-hydroxy-3-oxobutyl phosphate and 5-amino-6-(D-ribitylamino)uracil: step 1/2. In terms of biological role, catalyzes the formation of 6,7-dimethyl-8-ribityllumazine by condensation of 5-amino-6-(D-ribitylamino)uracil with 3,4-dihydroxy-2-butanone 4-phosphate. This is the penultimate step in the biosynthesis of riboflavin. This chain is 6,7-dimethyl-8-ribityllumazine synthase, found in Cronobacter sakazakii (strain ATCC BAA-894) (Enterobacter sakazakii).